The sequence spans 498 residues: ATP synthase subunit beta, chloroplastic (498 aa).

172 to 179 (GGAGVGKT) is a binding site for ATP.

This sequence belongs to the ATPase alpha/beta chains family. In terms of assembly, F-type ATPases have 2 components, CF(1) - the catalytic core - and CF(0) - the membrane proton channel. CF(1) has five subunits: alpha(3), beta(3), gamma(1), delta(1), epsilon(1). CF(0) has four main subunits: a(1), b(1), b'(1) and c(9-12).

It localises to the plastid. It is found in the chloroplast thylakoid membrane. It catalyses the reaction ATP + H2O + 4 H(+)(in) = ADP + phosphate + 5 H(+)(out). Produces ATP from ADP in the presence of a proton gradient across the membrane. The catalytic sites are hosted primarily by the beta subunits. The chain is ATP synthase subunit beta, chloroplastic from Nypa fruticans (Nypa palm).